The sequence spans 301 residues: Protein FdhE homolog (301 aa).

It belongs to the FdhE family.

Its subcellular location is the cytoplasm. In terms of biological role, necessary for formate dehydrogenase activity. The chain is Protein FdhE homolog from Shewanella baltica (strain OS185).